The primary structure comprises 387 residues: 3-ketoacyl-CoA thiolase (387 aa).

Cys91 functions as the Acyl-thioester intermediate in the catalytic mechanism. Catalysis depends on proton acceptor residues His343 and Cys373.

The protein belongs to the thiolase-like superfamily. Thiolase family. Heterotetramer of two alpha chains (FadB) and two beta chains (FadA).

Its subcellular location is the cytoplasm. The catalysed reaction is an acyl-CoA + acetyl-CoA = a 3-oxoacyl-CoA + CoA. It functions in the pathway lipid metabolism; fatty acid beta-oxidation. Functionally, catalyzes the final step of fatty acid oxidation in which acetyl-CoA is released and the CoA ester of a fatty acid two carbons shorter is formed. This is 3-ketoacyl-CoA thiolase from Vibrio vulnificus (strain CMCP6).